A 236-amino-acid polypeptide reads, in one-letter code: Glucosamine-6-phosphate deaminase (236 aa).

Asp67 (proton acceptor; for enolization step) is an active-site residue. Asn136 serves as the catalytic For ring-opening step. Residue His138 is the Proton acceptor; for ring-opening step of the active site. Residue Glu143 is the For ring-opening step of the active site.

It belongs to the glucosamine/galactosamine-6-phosphate isomerase family. NagB subfamily.

It catalyses the reaction alpha-D-glucosamine 6-phosphate + H2O = beta-D-fructose 6-phosphate + NH4(+). Its pathway is amino-sugar metabolism; N-acetylneuraminate degradation; D-fructose 6-phosphate from N-acetylneuraminate: step 5/5. Catalyzes the reversible isomerization-deamination of glucosamine 6-phosphate (GlcN6P) to form fructose 6-phosphate (Fru6P) and ammonium ion. This chain is Glucosamine-6-phosphate deaminase, found in Lachnoclostridium phytofermentans (strain ATCC 700394 / DSM 18823 / ISDg) (Clostridium phytofermentans).